Consider the following 230-residue polypeptide: Probable methylthioribulose-1-phosphate dehydratase (230 aa).

C87 is a binding site for substrate. Zn(2+) contacts are provided by H105 and H107. E129 serves as the catalytic Proton donor/acceptor. Residue H185 participates in Zn(2+) binding.

It belongs to the aldolase class II family. MtnB subfamily. Requires Zn(2+) as cofactor.

It is found in the cytoplasm. It carries out the reaction 5-(methylsulfanyl)-D-ribulose 1-phosphate = 5-methylsulfanyl-2,3-dioxopentyl phosphate + H2O. It participates in amino-acid biosynthesis; L-methionine biosynthesis via salvage pathway; L-methionine from S-methyl-5-thio-alpha-D-ribose 1-phosphate: step 2/6. Catalyzes the dehydration of methylthioribulose-1-phosphate (MTRu-1-P) into 2,3-diketo-5-methylthiopentyl-1-phosphate (DK-MTP-1-P). This Drosophila pseudoobscura pseudoobscura (Fruit fly) protein is Probable methylthioribulose-1-phosphate dehydratase.